We begin with the raw amino-acid sequence, 552 residues long: Hyaluronan synthase 2 (552 aa).

Topologically, residues 1–11 (MHCERFLCVLR) are cytoplasmic. Residues 12–32 (IIGTTLFGVSLLLGITAAYIV) form a helical membrane-spanning segment. Residues 33-45 (GYQFIQTDNYYFS) are Extracellular-facing. Residues 46 to 66 (FGLYGAFLASHLIIQSLFAFL) traverse the membrane as a helical segment. Topologically, residues 67-374 (EHRKMKKSLE…NAMWFHKHHL (308 aa)) are cytoplasmic. At Thr110 the chain carries Phosphothreonine. Lys190 participates in a covalent cross-link: Glycyl lysine isopeptide (Lys-Gly) (interchain with G-Cter in ubiquitin). Ser221 is a glycosylation site (O-linked (GlcNAc) serine). Thr328 carries the phosphothreonine modification. A helical transmembrane segment spans residues 375–395 (WMTYEAVITGFFPFFLIATVI). Topologically, residues 396 to 402 (QLFYRGK) are extracellular. Residues 403–423 (IWNILLFLLTVQLVGLIKSSF) traverse the membrane as a helical segment. At 424–429 (ASCLRG) the chain is on the cytoplasmic side. A helical transmembrane segment spans residues 430 to 450 (NIVMVFMSLYSVLYMSSLLPA). The Extracellular segment spans residues 451–475 (KMFAIATINKAGWGTSGRKTIVVNF). A helical membrane pass occupies residues 476–496 (IGLIPVSVWFTILLGGVIFTI). Over 497–510 (YKESKKPFSESKQT) the chain is Cytoplasmic. The helical transmembrane segment at 511–531 (VLIVGTLIYACYWVMLLTLYV) threads the bilayer. The Extracellular portion of the chain corresponds to 532-552 (VLINKCGRRKKGQQYDMVLDV).

This sequence belongs to the NodC/HAS family. As to quaternary structure, homodimer; dimerization promotes enzymatic activity. Forms heterodimer with HAS3. Forms heterodimer with HAS1. Mg(2+) serves as cofactor. In terms of processing, phosphorylation at Thr-328 is essential for hyaluronan synthase activity. O-GlcNAcylation at Ser-221 increases the stability of HAS2 and plasma membrane localization. Post-translationally, ubiquitination at Lys-190; this ubiquitination is essential for hyaluronan synthase activity and homo- or hetero-oligomerization. Can also be poly-ubiquitinated. Deubiquitinated by USP17L22/USP17 and USP4. USP17L22/USP17 efficiently removes 'Lys-63'- and 'Lys-48'-linked polyubiquitin chains, whereas USP4 preferentially removes monoubiquitination and, partially, both 'Lys-63'- and 'Lys-48'-linked polyubiquitin chain. Expressed in heart, brain, spleen, lung and skeletal muscle.

The protein localises to the cell membrane. Its subcellular location is the endoplasmic reticulum membrane. The protein resides in the vesicle. It is found in the golgi apparatus membrane. It localises to the lysosome. It carries out the reaction [hyaluronan](n) + UDP-N-acetyl-alpha-D-glucosamine = N-acetyl-beta-D-glucosaminyl-(1-&gt;4)-[hyaluronan](n) + UDP + H(+). The enzyme catalyses N-acetyl-beta-D-glucosaminyl-(1-&gt;4)-[hyaluronan](n) + UDP-alpha-D-glucuronate = [hyaluronan](n+1) + UDP + H(+). It participates in glycan biosynthesis; hyaluronan biosynthesis. Catalyzes the addition of GlcNAc or GlcUA monosaccharides to the nascent hyaluronan polymer. Therefore, it is essential to hyaluronan synthesis a major component of most extracellular matrices that has a structural role in tissues architectures and regulates cell adhesion, migration and differentiation. This is one of the isozymes catalyzing that reaction and it is particularly responsible for the synthesis of high molecular mass hyaluronan. Required for the transition of endocardial cushion cells into mesenchymal cells, a process crucial for heart development. May also play a role in vasculogenesis. High molecular mass hyaluronan also play a role in early contact inhibition a process which stops cell growth when cells come into contact with each other or the extracellular matrix. Functionally, catalyzes the addition of GlcNAc or GlcUA monosaccharides to the nascent hyaluronan polymer. Therefore, it is essential to hyaluronan synthesis a major component of most extracellular matrices that has a structural role in tissues architectures and regulates cell adhesion, migration and differentiation. This is one of three isoenzymes responsible for cellular hyaluronan synthesis and it is particularly responsible for the synthesis of high molecular mass hyaluronan. The protein is Hyaluronan synthase 2 of Mus musculus (Mouse).